The primary structure comprises 487 residues: MTKEQKLQLAEIRTMIPEMRRVECIHFVGIGGAGMSGIAEVLLNEGYHISGSDMAENTVTVRLAQKGAEIFFGHQASNVAKASVVVVSTAIDPSNPEIVAAKENRIPVIRRAEMLAELMRYRHGIAVAGTHGKTTTTALTTQIYSEAGLDPTFVNGGLVKNAGTNARLGSSRFLIAEADESDASFLHLQPMVSIVTNIEADHMDTYGGDFETLKQTFIDFLHNLPFYGQAVMCVDDPVVRELLPQVSRQVITYGFSDDADVRLINYRQVGQQSFFTVQRKDRTDLDIVLNIPGKHNALNATAAIAVATEEDVEDEAILTALLNFEGAGRRFDQLGEFETGNGSAMLVDDYGHHPTEVDVTIKAARAGWAEKRLVMIFQPHRYSRTRDLYDDFANVLDNVDVLIMLDVYSAGETPIAGADGRALCRTIRGRGKIDPVFVPTIEALPPVLANIIQEGDLILTQGAGDVGKLAKQLASMELNIETMKKLG.

129–135 contacts ATP; it reads GTHGKTT.

This sequence belongs to the MurCDEF family.

It is found in the cytoplasm. It carries out the reaction UDP-N-acetyl-alpha-D-muramate + L-alanine + ATP = UDP-N-acetyl-alpha-D-muramoyl-L-alanine + ADP + phosphate + H(+). Its pathway is cell wall biogenesis; peptidoglycan biosynthesis. Cell wall formation. The protein is UDP-N-acetylmuramate--L-alanine ligase of Aliivibrio fischeri (strain ATCC 700601 / ES114) (Vibrio fischeri).